The primary structure comprises 164 residues: Transcription antitermination protein NusB (164 aa).

This sequence belongs to the NusB family.

Functionally, involved in transcription antitermination. Required for transcription of ribosomal RNA (rRNA) genes. Binds specifically to the boxA antiterminator sequence of the ribosomal RNA (rrn) operons. This is Transcription antitermination protein NusB from Chlorobaculum parvum (strain DSM 263 / NCIMB 8327) (Chlorobium vibrioforme subsp. thiosulfatophilum).